The following is a 334-amino-acid chain: Heat-inducible transcription repressor HrcA (334 aa).

It belongs to the HrcA family.

In terms of biological role, negative regulator of class I heat shock genes (grpE-dnaK-dnaJ and groELS operons). Prevents heat-shock induction of these operons. The sequence is that of Heat-inducible transcription repressor HrcA from Paracidovorax citrulli (strain AAC00-1) (Acidovorax citrulli).